The chain runs to 499 residues: Neuronal acetylcholine receptor subunit alpha-7 (499 aa).

Residues 1-19 (MRGSLCLALAASILHVSLQ) form the signal peptide. Topologically, residues 20-230 (GEFQRKLYKD…VSIRRRTLYY (211 aa)) are extracellular. 2 residues coordinate Ca(2+): R39 and V41. N43, N87, and N130 each carry an N-linked (GlcNAc...) asparagine glycan. A disulfide bridge links C147 with C161. Ca(2+) contacts are provided by S169 and Y207. A disulfide bond links C209 and C210. The next 3 helical transmembrane spans lie at 231–251 (GLNL…VFLL), 259–279 (ISLG…VAEI), and 292–312 (QYFA…VIVL). The essential for TMEM35A/NACHO-mediated proper subunit assembly and trafficking to cell membrane stretch occupies residues 257-264 (EKISLGIT). Over 313 to 466 (QYHHHDPDGG…WKFAACVVDR (154 aa)) the chain is Cytoplasmic. Residues 467 to 487 (LCLMAFSVFTILCTIGILMSA) form a helical membrane-spanning segment.

Belongs to the ligand-gated ion channel (TC 1.A.9) family. Acetylcholine receptor (TC 1.A.9.1) subfamily. Alpha-7/CHRNA7 sub-subfamily. As to quaternary structure, homopentamer. Homooligomer of the short form gives rise to unfunctional channels, as does coexpression of both long and short forms of the receptor. Can also form heteropentamers with CHRNB2, mainly found in basal forebrain cholinergic neurons. Interacts with RIC3; which is required for proper folding and assembly. Interacts with LYPD6. Interacts with CANX. In terms of processing, glycosylations at Asn-43, Asn-87 and Asn-130 are essential for TMEM35A/NACHO-mediated proper subunit assembly and trafficking to the cell membrane. As to expression, at least in chromaffin cells.

The protein resides in the postsynaptic cell membrane. It is found in the cell membrane. The catalysed reaction is Ca(2+)(in) = Ca(2+)(out). It carries out the reaction K(+)(in) = K(+)(out). The enzyme catalyses Na(+)(in) = Na(+)(out). It catalyses the reaction choline(out) = choline(in). The catalysed reaction is NH4(+)(in) = NH4(+)(out). It carries out the reaction L-arginine(in) = L-arginine(out). The enzyme catalyses guanidine(out) = guanidine(in). Its activity is regulated as follows. Activated by a myriad of ligands such as acetylcholine, cytisine, nicotine, choline and epibatidine. Oligomeric amyloid-beta protein 42 activates specifially CHRNA7:CHRNB2 nAchRs. Activity is modulated by positive allosteric modulators (PAMs), such as flavonoids, with a wide range of chemical diversity, pharmacological sensitivity and efficacy. AChR activity is inhibited by the antagonists alpha-conotoxons RgIA, ImI and ImII, small disulfide-constrained peptides from cone snails. Alpha-conotoxin PnIC selectively inhibits CHRNA7:CHRNB2 over CHRNA7 homopentamer. Component of neuronal acetylcholine receptors (nAChRs) that function as pentameric, ligand-gated cation channels with high calcium permeability among other activities. nAChRs are excitatory neurotrasnmitter receptors formed by a collection of nAChR subunits known to mediate synaptic transmission in the nervous system and the neuromuscular junction. Each nAchR subunit confers differential attributes to channel properties, including activation, deactivation and desensitization kinetics, pH sensitivity, cation permeability, and binding to allosteric modulators. CHRNA7 forms homopentameric neuronal acetylcholine receptors abundantly expressed in the central nervous system, characterized by fast desensitization and high calcium permeability. Also forms heteropentamers with CHRNB2, mainly expressed in basal forebrain cholinergic neurons. Involved in the modulation of calcium-dependent signaling pathways and influences the release of neurotransmitters, including dopamine, glutamate and GABA. Also expressed in non-neuronal cells such as immune cells like lymphocytes, monocytes and macrophages. In T cells, activation induces metabotropic signaling that results in an increase of intracellular Ca2+ concentrations, independent of ionotropic receptor functions. In macrophages, required for acetylcholine-mediated inhibition of TNF and other inflammatory cytokine release. Once activated by acetylcholine, nicotine or other agonists, selectively inhibits production of pro-inflammatory cytokines while leaving anti-inflammatory cytokines undisturbed. Stimulates the cholinergic anti-inflammatory pathway, controlling inflammation by inhibiting NFKB nuclear translocation and activating the JAK2-STAT3 pathway, independently of ion channel activity. Also expressed in the urothelium where it modulates reflex bladder activity by increasing intracellular calcium through internal stores and decreasing basal ATP release. The chain is Neuronal acetylcholine receptor subunit alpha-7 (CHRNA7) from Bos taurus (Bovine).